A 768-amino-acid polypeptide reads, in one-letter code: Protein transport protein Sec23A (768 aa).

Position 2 is an N-acetylthreonine (threonine 2). Zn(2+)-binding residues include cysteine 61, cysteine 66, cysteine 85, and cysteine 88. Threonine 308 carries the post-translational modification Phosphothreonine. A Gelsolin-like repeat occupies 632–718 (PEPVLLDSSS…EHGGSQARFL (87 aa)).

Belongs to the SEC23/SEC24 family. SEC23 subfamily. COPII is composed of at least five proteins: the Sec23/24 complex, the Sec13/31 complex and Sar1. Interacts with SEC23IP. Interacts with HTR4. Interacts with SEC16A. Interacts with SLC6A4. Interacts (as part of the Sec23/24 complex) with SEC22B; recruits SEC22B into COPII-coated vesicles and allows the transport of this cargo from the endoplasmic reticulum to the Golgi. Interacts (via Gelsolin-like repeat) with MIA2 and MIA3; specifically involved in the transport of large cargos like the collagen COL7A1. Interacts with DDHD1. Interacts with TMEM39A. Interacts with SACM1L; this interaction is reduced in the absence of TMEM39A. Interacts with kinase FAM20C; transport of FAM20C from the endoplasmic reticulum to the Golgi is likely to be mediated by COPII vesicles.

Its subcellular location is the cytoplasmic vesicle. It localises to the COPII-coated vesicle membrane. The protein resides in the endoplasmic reticulum membrane. The protein localises to the cytoplasm. It is found in the cytosol. Its function is as follows. Component of the coat protein complex II (COPII) which promotes the formation of transport vesicles from the endoplasmic reticulum (ER). The coat has two main functions, the physical deformation of the endoplasmic reticulum membrane into vesicles and the selection of cargo molecules for their transport to the Golgi complex. Required for the translocation of insulin-induced glucose transporter SLC2A4/GLUT4 to the cell membrane. This chain is Protein transport protein Sec23A, found in Bos taurus (Bovine).